The following is a 24-amino-acid chain: DYE-linked aldehyde dehydrogenase, alpha chain (24 aa).

In terms of assembly, heterotetramer composed of an alpha, a beta and two gamma chains. Mo-molybdopterin cytosine dinucleotide is required as a cofactor.

In terms of biological role, active with aldehydes and formate esters as substrates. This chain is DYE-linked aldehyde dehydrogenase, alpha chain, found in Amycolatopsis methanolica.